Consider the following 317-residue polypeptide: Glutaminase (317 aa).

Ser-67, Asn-118, Glu-162, Asn-169, Tyr-193, Tyr-245, and Val-263 together coordinate substrate.

The protein belongs to the glutaminase family. Homotetramer.

The catalysed reaction is L-glutamine + H2O = L-glutamate + NH4(+). This is Glutaminase from Brucella abortus (strain S19).